Here is a 238-residue protein sequence, read N- to C-terminus: SH2 domain-containing adapter protein F (238 aa).

Disordered regions lie at residues methionine 1–tryptophan 70 and glycine 85–serine 121. Phosphoserine is present on serine 39. A compositionally biased stretch (acidic residues) spans glutamate 55–glutamine 66. Tyrosine 64 carries the post-translational modification Phosphotyrosine. The region spanning tryptophan 138–valine 233 is the SH2 domain.

As to quaternary structure, interacts with phosphorylated 'Tyr-720' of PDGFRA via its SH2 domain. In terms of processing, may become phosphorylated upon binding to PDGFRA.

In terms of biological role, adapter protein which may play a role in the regulation of apoptosis in response to PDGF. This is SH2 domain-containing adapter protein F from Mus musculus (Mouse).